We begin with the raw amino-acid sequence, 278 residues long: ATP synthase subunit a (278 aa).

Transmembrane regions (helical) follow at residues 41–61 (FLNI…LLFF), 108–128 (LTIF…VDFV), 149–168 (INIT…YFGI), 180–200 (FFFQ…LELI), 222–242 (LIFI…LSVP), and 244–264 (AIFH…LTII).

It belongs to the ATPase A chain family. F-type ATPases have 2 components, CF(1) - the catalytic core - and CF(0) - the membrane proton channel. CF(1) has five subunits: alpha(3), beta(3), gamma(1), delta(1), epsilon(1). CF(0) has three main subunits: a(1), b(2) and c(9-12). The alpha and beta chains form an alternating ring which encloses part of the gamma chain. CF(1) is attached to CF(0) by a central stalk formed by the gamma and epsilon chains, while a peripheral stalk is formed by the delta and b chains.

The protein resides in the cell membrane. Its function is as follows. Key component of the proton channel; it plays a direct role in the translocation of protons across the membrane. In Wigglesworthia glossinidia brevipalpis, this protein is ATP synthase subunit a.